Here is a 1033-residue protein sequence, read N- to C-terminus: SGGFDFSFLPQPPQEKAHDGGRYYLGPGPMGLMGPRGPPGASGAPGPQGFQGPAGEPGEPGQTGPAGARGPAGPPGKGVVGPQGARGFPGTPGLPGFKGIRGHNGLDGLKGQPGAPGVKGEPGAPGENGTPGQTGARGLPGERGRVGAPGPAGSRGSDGSVGPVGPAGPIGSAGPPGFPGAPGPKGELGPVGNTGPSGPAGPRGEQGLPGVSGPVGPPGNPGANGLTGAKGAAGLPGVAGAPGLPGPRGIPGPVGASGATGARGLVGEPGPAGSKGESGGKGEPGSAGPQGPPGSSGEEGKRGPSGESGSTGPTGPPGLRGGPGSRGLPGADGRAGVIGPAGARGASGPAGVRGPSGDTGRPGEPGLMGARGLPGSPGNVGPAGKEGPAGLPGIDGRPGPIGPAGARGEAGNIGFPGPKGPAGDPGKAGEKGHAGLAGNRGAPGPDGNNGAQGPPGLQGVQGGKGEQGPAGPPGFQGLPGPAGTTGEAGKPGERGIPGEFGLPGPAGPRGERGSGAVGPSGAIGSRGPSGPPGPDGNKGEPGVVGAPGTAGPAGSGGLPGERGAAGIPGGKGEKGETGLRGEVGTTGRDGARGAPGAVGAPGPAGATGDRGEAGAAGPAGPAGPRGSPGERGEVGPAGPNGFAGPAGAAGQPGAKGERGTKGPKGENGIVGPTGPVGSAGPAGPNGPAGPAGSRGDGGPPGVTGFPGAAGRTGPPGPSGITGPPGPPGAAGKEGLRGPRGDQGPVGRTGETGAGGPPGFTGEKGPSGEPGTAGPPGTAGPQGLLGAPGILGLPGSRGERGLPGVAGAVGEPGPLGIGPPGARGPSGGVGPGVNGAPGEAGRDGNPGSDGPPGRDGLPGHKGERGYAGNGPVGAAGAPGPHGAVGPAGKHGNRGEPGPVGSAGPVGALGPRGPSGPQGIRGDKGEAGDKGPRGLPGLKGHNGLQGLPGLAGQHGDQGSPGPVGPAGPRGPAGPSGPPGKDGRTGHPGAVGPAGIRGSQGSQGPSGPPGPPGPPGPPGASGGGYDFGYEGDFYRA.

Residues 1–1033 (SGGFDFSFLP…FGYEGDFYRA (1033 aa)) form a disordered region. Low complexity-rich tracts occupy residues 25 to 71 (LGPG…ARGP), 154 to 175 (SRGSDGSVGPVGPAGPIGSAGP), and 221 to 242 (PGANGLTGAKGAAGLPGVAGAP). Residues 276-285 (GESGGKGEPG) are compositionally biased toward gly residues. The segment covering 286 to 296 (SAGPQGPPGSS) has biased composition (low complexity). The segment covering 318–327 (GLRGGPGSRG) has biased composition (gly residues). 2 stretches are compositionally biased toward low complexity: residues 340 to 356 (PAGARGASGPAGVRGPS) and 391 to 410 (LPGIDGRPGPIGPAGARGEA). The segment covering 459-468 (GVQGGKGEQG) has biased composition (gly residues). Composition is skewed to low complexity over residues 519–528 (PSGAIGSRGP) and 540–550 (EPGVVGAPGTA). Positions 551-560 (GPAGSGGLPG) are enriched in gly residues. Low complexity-rich tracts occupy residues 583–627 (VGTT…PRGS) and 634–654 (VGPAGPNGFAGPAGAAGQPGA). The segment covering 655-664 (KGERGTKGPK) has biased composition (basic and acidic residues). Positions 672-682 (PTGPVGSAGPA) are enriched in low complexity. The segment covering 692 to 701 (GSRGDGGPPG) has biased composition (gly residues). The segment covering 703–712 (TGFPGAAGRT) has biased composition (low complexity). A compositionally biased stretch (gly residues) spans 749-758 (GETGAGGPPG). 2 stretches are compositionally biased toward low complexity: residues 766–793 (SGEPGTAGPPGTAGPQGLLGAPGILGLP) and 801–811 (LPGVAGAVGEP). Gly residues predominate over residues 812–834 (GPLGIGPPGARGPSGGVGPGVNG). Over residues 873–909 (AAGAPGPHGAVGPAGKHGNRGEPGPVGSAGPVGALGP) the composition is skewed to low complexity. Residues 919-930 (RGDKGEAGDKGP) show a composition bias toward basic and acidic residues. Over residues 1003 to 1015 (SGPPGPPGPPGPP) the composition is skewed to pro residues.

The protein belongs to the fibrillar collagen family. In terms of assembly, trimers of one alpha 2(I) and two alpha 1(I) chains. Interacts (via C-terminus) with TMEM131 (via PapD-L domain); the interaction is direct and is involved in assembly and TRAPPIII ER-to-Golgi transport complex-dependent secretion of collagen. Post-translationally, prolines at the third position of the tripeptide repeating unit (G-X-Y) are hydroxylated in some or all of the chains. As to expression, expressed in bone.

It localises to the secreted. Its subcellular location is the extracellular space. The protein localises to the extracellular matrix. Functionally, type I collagen is a member of group I collagen (fibrillar forming collagen). The polypeptide is Collagen alpha-2(I) chain (Mylodon darwinii (Giant ground sloth)).